The sequence spans 339 residues: N-acetylmuramate/N-acetylglucosamine kinase (339 aa).

This sequence belongs to the kinase AmgK family.

The catalysed reaction is N-acetyl-D-muramate + ATP = N-acetyl-alpha-D-muramate 1-phosphate + ADP + H(+). It catalyses the reaction N-acetyl-D-glucosamine + ATP = N-acetyl-alpha-D-glucosamine 1-phosphate + ADP + H(+). Its pathway is cell wall biogenesis; peptidoglycan recycling. Sugar kinase that catalyzes the ATP-dependent phosphorylation of N-acetylmuramate (MurNAc) and N-acetylglucosamine (GlcNAc) at its C1 hydroxyl group, leading to MurNAc alpha-1P and GlcNAc alpha-1P, respectively. Is involved in peptidoglycan recycling as part of a cell wall recycling pathway that bypasses de novo biosynthesis of the peptidoglycan precursor UDP-MurNAc. Plays a role in intrinsic resistance to fosfomycin, which targets the de novo synthesis of UDP-MurNAc. Is also able to use N-acetylgalactosamine (GalNAc) as a substrate, but not N-acetylmannosamine, N-deacetylated sugars or glucose. The protein is N-acetylmuramate/N-acetylglucosamine kinase of Pseudomonas putida (strain ATCC 47054 / DSM 6125 / CFBP 8728 / NCIMB 11950 / KT2440).